A 452-amino-acid chain; its full sequence is Trigger factor (452 aa).

Residues 170-256 (DSIVKVDFVE…IKSIKKRDLP (87 aa)) form the PPIase FKBP-type domain.

Belongs to the FKBP-type PPIase family. Tig subfamily.

The protein resides in the cytoplasm. The catalysed reaction is [protein]-peptidylproline (omega=180) = [protein]-peptidylproline (omega=0). Its function is as follows. Involved in protein export. Acts as a chaperone by maintaining the newly synthesized protein in an open conformation. Functions as a peptidyl-prolyl cis-trans isomerase. The polypeptide is Trigger factor (Borreliella afzelii (strain PKo) (Borrelia afzelii)).